We begin with the raw amino-acid sequence, 174 residues long: Nucleoside diphosphate kinase (174 aa).

ATP-binding residues include Lys14, Phe62, Arg90, Thr96, and Arg107. Catalysis depends on His123, which acts as the Pros-phosphohistidine intermediate.

Belongs to the NDK family. It depends on Mg(2+) as a cofactor.

The protein resides in the cytoplasm. It catalyses the reaction a 2'-deoxyribonucleoside 5'-diphosphate + ATP = a 2'-deoxyribonucleoside 5'-triphosphate + ADP. It carries out the reaction a ribonucleoside 5'-diphosphate + ATP = a ribonucleoside 5'-triphosphate + ADP. Functionally, major role in the synthesis of nucleoside triphosphates other than ATP. The ATP gamma phosphate is transferred to the NDP beta phosphate via a ping-pong mechanism, using a phosphorylated active-site intermediate. The chain is Nucleoside diphosphate kinase from Thermococcus kodakarensis (strain ATCC BAA-918 / JCM 12380 / KOD1) (Pyrococcus kodakaraensis (strain KOD1)).